A 259-amino-acid chain; its full sequence is Kynurenine formamidase (259 aa).

The HGGXW motif lies at 34 to 38 (HGGAW). Ser103 acts as the Nucleophile in catalysis. Catalysis depends on residues Asp196 and His228.

This sequence belongs to the kynurenine formamidase family. Homodimer.

It catalyses the reaction N-formyl-L-kynurenine + H2O = L-kynurenine + formate + H(+). It participates in amino-acid degradation; L-tryptophan degradation via kynurenine pathway; L-kynurenine from L-tryptophan: step 2/2. Functionally, catalyzes the hydrolysis of N-formyl-L-kynurenine to L-kynurenine, the second step in the kynurenine pathway of tryptophan degradation. Kynurenine may be further oxidized to nicotinic acid, NAD(H) and NADP(H). Required for elimination of toxic metabolites. The polypeptide is Kynurenine formamidase (Meyerozyma guilliermondii (strain ATCC 6260 / CBS 566 / DSM 6381 / JCM 1539 / NBRC 10279 / NRRL Y-324) (Yeast)).